A 178-amino-acid chain; its full sequence is ATP-dependent protease subunit HslV (178 aa).

T7 is a catalytic residue. G162, C165, and T168 together coordinate Na(+).

This sequence belongs to the peptidase T1B family. HslV subfamily. As to quaternary structure, a double ring-shaped homohexamer of HslV is capped on each side by a ring-shaped HslU homohexamer. The assembly of the HslU/HslV complex is dependent on binding of ATP.

The protein localises to the cytoplasm. It catalyses the reaction ATP-dependent cleavage of peptide bonds with broad specificity.. Allosterically activated by HslU binding. In terms of biological role, protease subunit of a proteasome-like degradation complex believed to be a general protein degrading machinery. The chain is ATP-dependent protease subunit HslV from Azoarcus sp. (strain BH72).